We begin with the raw amino-acid sequence, 378 residues long: Forkhead box protein F1 (378 aa).

Residues 1–45 (MSAPDKQQPPHGGGTGGGGGAGGQAMDPAAAGPTKAKKTNAGVRR) are disordered. A compositionally biased stretch (gly residues) spans 11 to 23 (HGGGTGGGGGAGG). The span at 24–42 (QAMDPAAAGPTKAKKTNAG) shows a compositional bias: low complexity. A DNA-binding region (fork-head) is located at residues 47–138 (EKPPYSYIAL…EFMFEEGSFR (92 aa)).

As to expression, expressed primarily in lung in alveolar type II pneumocyte cells, and to a lesser extent in placenta, stomach, intestine and colon.

The protein resides in the nucleus. Its function is as follows. Probable transcription activator for a number of lung-specific genes. In Mus musculus (Mouse), this protein is Forkhead box protein F1 (Foxf1).